The sequence spans 63 residues: Overexpressed in colon carcinoma 1 protein homolog (63 aa).

Positions Met1–Ser10 are enriched in polar residues. Residues Met1–Asn37 form a disordered region.

Belongs to the OCC1 family.

The polypeptide is Overexpressed in colon carcinoma 1 protein homolog (Rattus norvegicus (Rat)).